Here is a 264-residue protein sequence, read N- to C-terminus: tRNA (guanine-N(1)-)-methyltransferase (264 aa).

Residues glycine 125 and 145 to 150 (LGDFVL) each bind S-adenosyl-L-methionine.

This sequence belongs to the RNA methyltransferase TrmD family. As to quaternary structure, homodimer.

The protein resides in the cytoplasm. It carries out the reaction guanosine(37) in tRNA + S-adenosyl-L-methionine = N(1)-methylguanosine(37) in tRNA + S-adenosyl-L-homocysteine + H(+). Its function is as follows. Specifically methylates guanosine-37 in various tRNAs. This chain is tRNA (guanine-N(1)-)-methyltransferase, found in Burkholderia ambifaria (strain ATCC BAA-244 / DSM 16087 / CCUG 44356 / LMG 19182 / AMMD) (Burkholderia cepacia (strain AMMD)).